Consider the following 443-residue polypeptide: Intermediate filament protein ifd-2 (443 aa).

The tract at residues 1–58 (MTDPLNPTRLQNHPALARIIESGRTNLPTGITTSGALSAYAQNAAAIIRDNREREKVE) is head. An IF rod domain is found at 55 to 405 (EKVEIADLNN…KLMENAEHLR (351 aa)). The tract at residues 59–90 (IADLNNRLARYVEKVRFLEAQNRVLENDIGVF) is coil 1A. Positions 91–104 (RNAAHTHSERIAVY) are linker 1. Residues 105 to 239 (FESEKASLFT…SQHDIAIREE (135 aa)) form a coil 1B region. A linker 12 region spans residues 240–257 (ISKARRDTTNKNRDYFHN). A coil 2 region spans residues 258–403 (ELHAAMKEIR…YRKLMENAEH (146 aa)). A tail region spans residues 404–443 (LRTTVQTHVTYNAPPPPLPQSGPRTTSYHAYGSAYNDSLL).

The protein belongs to the intermediate filament family.

The protein resides in the cytoplasm. In terms of biological role, cytoplasmic intermediate filaments provide mechanical strength to cells. Not essential protein. The protein is Intermediate filament protein ifd-2 (ifd-2) of Caenorhabditis elegans.